Reading from the N-terminus, the 466-residue chain is Adenosylhomocysteinase (466 aa).

Thr-57, Asp-132, and Glu-192 together coordinate substrate. 193–195 (TTT) provides a ligand contact to NAD(+). Residues Lys-222 and Asp-226 each contribute to the substrate site. Residues Asn-227, 256–261 (GYGDVG), Glu-279, Asn-314, 335–337 (IGH), and Asn-380 contribute to the NAD(+) site.

The protein belongs to the adenosylhomocysteinase family. NAD(+) serves as cofactor.

It is found in the cytoplasm. The catalysed reaction is S-adenosyl-L-homocysteine + H2O = L-homocysteine + adenosine. It functions in the pathway amino-acid biosynthesis; L-homocysteine biosynthesis; L-homocysteine from S-adenosyl-L-homocysteine: step 1/1. Functionally, may play a key role in the regulation of the intracellular concentration of adenosylhomocysteine. The chain is Adenosylhomocysteinase from Chromobacterium violaceum (strain ATCC 12472 / DSM 30191 / JCM 1249 / CCUG 213 / NBRC 12614 / NCIMB 9131 / NCTC 9757 / MK).